A 145-amino-acid polypeptide reads, in one-letter code: Peptide methionine sulfoxide reductase MsrB (145 aa).

In terms of domain architecture, MsrB spans lysine 6–valine 129. Catalysis depends on cysteine 118, which acts as the Nucleophile.

The protein belongs to the MsrB Met sulfoxide reductase family.

The enzyme catalyses L-methionyl-[protein] + [thioredoxin]-disulfide + H2O = L-methionyl-(R)-S-oxide-[protein] + [thioredoxin]-dithiol. In Listeria welshimeri serovar 6b (strain ATCC 35897 / DSM 20650 / CCUG 15529 / CIP 8149 / NCTC 11857 / SLCC 5334 / V8), this protein is Peptide methionine sulfoxide reductase MsrB.